A 291-amino-acid polypeptide reads, in one-letter code: 4-diphosphocytidyl-2-C-methyl-D-erythritol kinase (291 aa).

The active site involves Lys-10. 99 to 109 (PMGGGLGGGSS) lines the ATP pocket. Asp-141 is an active-site residue.

It belongs to the GHMP kinase family. IspE subfamily. In terms of assembly, homodimer.

It catalyses the reaction 4-CDP-2-C-methyl-D-erythritol + ATP = 4-CDP-2-C-methyl-D-erythritol 2-phosphate + ADP + H(+). The protein operates within isoprenoid biosynthesis; isopentenyl diphosphate biosynthesis via DXP pathway; isopentenyl diphosphate from 1-deoxy-D-xylulose 5-phosphate: step 3/6. Catalyzes the phosphorylation of the position 2 hydroxy group of 4-diphosphocytidyl-2C-methyl-D-erythritol. The sequence is that of 4-diphosphocytidyl-2-C-methyl-D-erythritol kinase from Photorhabdus laumondii subsp. laumondii (strain DSM 15139 / CIP 105565 / TT01) (Photorhabdus luminescens subsp. laumondii).